The sequence spans 1284 residues: 1,6-alpha-glucosyltransferase (1284 aa).

Positions 1–35 (MRPPNKEIPRILAFFTAFTLFGSTLALLPAPPAHA) are cleaved as a signal peptide. Asp433 functions as the Nucleophile in the catalytic mechanism. The active site involves Asp436. Asp495 acts as the Proton donor in catalysis. CBM6 domains are found at residues 856–988 (SQYE…ITVP) and 994–1120 (GKYE…LLLS).

Belongs to the glycosyl hydrolase 31 family.

It is found in the secreted. It catalyses the reaction 2 D-maltotetraose = alpha-isomaltosyl-(1-&gt;4)-D-maltotriose + D-maltotriose. It carries out the reaction Transfers an alpha-D-glucosyl residue in a (1-&gt;4)-alpha-D-glucan to the primary hydroxy group of glucose, free or combined in a (1-&gt;4)-alpha-D-glucan.. Strongly activated and stabilized by various divalent cations. Strongly inhibited by Cu(2+), Hg(2+) and EDTA, and moderately inhibited by Tris. In terms of biological role, glycosyltransferase involved, together with CtsY, in the conversion of alpha-1,4-glucan into a cyclic tetrasaccharide (CTS) constructed from four alpha-glucopyranosyl residues. Catalyzes an intermolecular transglucosylation in which a glucose residue at the non-reducing end of maltotetraose is transferred to the 6-OH of an other non-reducing glucose, leading to the formation of alpha-isomaltosyl-(1-&gt;4)-D-maltotriose. Has a wide substrate specificity, and acts on oligosaccharides with alpha-1,4-glucosidic linkages at the non-reducing end, except for maltose. In contrast, has little activity toward oligosaccharides with alpha-1,6-glucosidic linkages at the non-reducing end. The chain is 1,6-alpha-glucosyltransferase from Sporosarcina globispora (Bacillus globisporus).